The primary structure comprises 460 residues: NADH-ubiquinone oxidoreductase chain 4 (460 aa).

12 helical membrane passes run 20-42 (PKWLWTTTTAHSLLIASISLMWF), 61-81 (PLSTPLLVLTCWLLPLMILAS), 93-113 (QRLYITLLASLQTFLIMAFGA), 114-134 (TEIIMFYIMFEATLIPTLIII), 148-168 (TYFLFYTLAGSLPLLVALLLL), 195-215 (IWWAACLIAFLVKMPLYGVHL), 225-245 (PVAGSMVLAAVLLKLGGYGMM), 258-278 (LAYPFIILALWGIIMTGSICL), 285-304 (SLIAYSSVSHMGLVAGGILI), 308-330 (WGFSGAIILMIAHGLVSSALFCL), 351-371 (IIFPLTAVWWFIANLANLALP), and 394-414 (ILLTGLGTLITAGYSLYMFLM).

Belongs to the complex I subunit 4 family.

It localises to the mitochondrion membrane. The catalysed reaction is a ubiquinone + NADH + 5 H(+)(in) = a ubiquinol + NAD(+) + 4 H(+)(out). Functionally, core subunit of the mitochondrial membrane respiratory chain NADH dehydrogenase (Complex I) that is believed to belong to the minimal assembly required for catalysis. Complex I functions in the transfer of electrons from NADH to the respiratory chain. The immediate electron acceptor for the enzyme is believed to be ubiquinone. This chain is NADH-ubiquinone oxidoreductase chain 4 (MT-ND4), found in Carassius auratus (Goldfish).